A 477-amino-acid chain; its full sequence is Cobyric acid synthase (477 aa).

The region spanning 248-432 (GLHIACPMLS…LHGLFSGDGF (185 aa)) is the GATase cobBQ-type domain. Cysteine 330 acts as the Nucleophile in catalysis. Histidine 424 is a catalytic residue.

The protein belongs to the CobB/CobQ family. CobQ subfamily.

The protein operates within cofactor biosynthesis; adenosylcobalamin biosynthesis. Catalyzes amidations at positions B, D, E, and G on adenosylcobyrinic A,C-diamide. NH(2) groups are provided by glutamine, and one molecule of ATP is hydrogenolyzed for each amidation. In Paracoccus denitrificans (strain Pd 1222), this protein is Cobyric acid synthase.